The following is a 501-amino-acid chain: Lycopene beta cyclase, chloroplastic (501 aa).

The N-terminal 48 residues, 1-48 (MDTLLKTPNKLDFFIPQFHGFERLCSNNPYHSRVRLGVKKRAIKIVSS), are a transit peptide targeting the chloroplast. Residue V49 is modified to N-acetylvaline. 85–113 (LAIVGGGPAGLAVAQQVSEAGLSVCSIDP) contributes to the NAD(+) binding site.

Belongs to the lycopene cyclase family.

It localises to the plastid. The protein resides in the chloroplast. It carries out the reaction a carotenoid psi-end group = a carotenoid beta-end derivative. Its pathway is carotenoid biosynthesis; beta-carotene biosynthesis. The protein operates within carotenoid biosynthesis; beta-zeacarotene biosynthesis. In terms of biological role, involved in carotenoid biosynthesis. Catalyzes the double cyclization reaction which converts lycopene to beta-carotene and neurosporene to beta-zeacarotene. Major lycopene beta-cyclase that does not seem to be involved in neoxanthin synthesis. Involved in salt tolerance improvement by increasing synthesis of carotenoids, which impairs reactive oxygen species (ROS) and protects the photosynthetic system under salt stress. In Arabidopsis thaliana (Mouse-ear cress), this protein is Lycopene beta cyclase, chloroplastic.